A 313-amino-acid chain; its full sequence is LUC7-related splicing factor homolog (313 aa).

The segment at 237–313 (RKEREEKLGS…RDRRDRDRRY (77 aa)) is disordered.

This sequence belongs to the Luc7 family.

This chain is LUC7-related splicing factor homolog, found in Caenorhabditis elegans.